We begin with the raw amino-acid sequence, 156 residues long: Ribosome maturation factor RimP (156 aa).

The protein belongs to the RimP family.

The protein localises to the cytoplasm. Functionally, required for maturation of 30S ribosomal subunits. This is Ribosome maturation factor RimP from Oceanobacillus iheyensis (strain DSM 14371 / CIP 107618 / JCM 11309 / KCTC 3954 / HTE831).